We begin with the raw amino-acid sequence, 66 residues long: Large ribosomal subunit protein eL29 (66 aa).

Residues 1–14 (MAKSKNSTNKNQIS) show a composition bias toward polar residues. The interval 1–66 (MAKSKNSTNK…KNLEKKVNKE (66 aa)) is disordered. The segment covering 15–31 (KSHRNGIKKPKDHRHIS) has biased composition (basic residues). A compositionally biased stretch (basic and acidic residues) spans 47–66 (IKNDPSIKKSKNLEKKVNKE).

The protein belongs to the eukaryotic ribosomal protein eL29 family.

It is found in the cytoplasm. In Tetrahymena thermophila, this protein is Large ribosomal subunit protein eL29 (RPL29).